We begin with the raw amino-acid sequence, 245 residues long: Thiopurine S-methyltransferase (245 aa).

29 to 40 (WQEKWVNHKTGF) serves as a coordination point for S-adenosyl-L-methionine. F40 is a binding site for substrate. K58 carries the post-translational modification N6-acetyllysine. L69, E90, and R152 together coordinate S-adenosyl-L-methionine.

The protein belongs to the class I-like SAM-binding methyltransferase superfamily. TPMT family. Monomer.

Its subcellular location is the cytoplasm. The enzyme catalyses S-adenosyl-L-methionine + a thiopurine = S-adenosyl-L-homocysteine + a thiopurine S-methylether.. The chain is Thiopurine S-methyltransferase (TPMT) from Bos taurus (Bovine).